Here is a 301-residue protein sequence, read N- to C-terminus: Nucleotide-binding protein Mb1456 (301 aa).

24–31 (GLSGAGRG) provides a ligand contact to ATP. 75-78 (DVRS) is a binding site for GTP.

It belongs to the RapZ-like family.

Displays ATPase and GTPase activities. The protein is Nucleotide-binding protein Mb1456 of Mycobacterium bovis (strain ATCC BAA-935 / AF2122/97).